Consider the following 129-residue polypeptide: Glycine cleavage system H protein (129 aa).

Residues 24-106 (TYTVGITEHA…YVGGWIFKIK (83 aa)) enclose the Lipoyl-binding domain. Lysine 65 carries the N6-lipoyllysine modification.

Belongs to the GcvH family. In terms of assembly, the glycine cleavage system is composed of four proteins: P, T, L and H. It depends on (R)-lipoate as a cofactor.

Its function is as follows. The glycine cleavage system catalyzes the degradation of glycine. The H protein shuttles the methylamine group of glycine from the P protein to the T protein. The polypeptide is Glycine cleavage system H protein (Salmonella paratyphi B (strain ATCC BAA-1250 / SPB7)).